Consider the following 567-residue polypeptide: Amino-acid acetyltransferase, mitochondrial (567 aa).

Positions 392–558 (KDSPQTNPLH…ARLKEYAKHI (167 aa)) constitute an N-acetyltransferase domain.

Belongs to the acetyltransferase family.

It localises to the mitochondrion. The catalysed reaction is L-glutamate + acetyl-CoA = N-acetyl-L-glutamate + CoA + H(+). The protein operates within amino-acid biosynthesis; L-arginine biosynthesis; N(2)-acetyl-L-ornithine from L-glutamate: step 1/4. Its function is as follows. N-acetylglutamate synthase involved in arginine biosynthesis. The sequence is that of Amino-acid acetyltransferase, mitochondrial (ARG2) from Vanderwaltozyma polyspora (strain ATCC 22028 / DSM 70294 / BCRC 21397 / CBS 2163 / NBRC 10782 / NRRL Y-8283 / UCD 57-17) (Kluyveromyces polysporus).